The primary structure comprises 120 residues: Small ribosomal subunit protein eS24 (120 aa).

The segment at 101 to 120 (RDAGTKQKKGGSKGGQGAKG) is disordered.

It belongs to the eukaryotic ribosomal protein eS24 family.

This Saccharolobus islandicus (strain M.16.27) (Sulfolobus islandicus) protein is Small ribosomal subunit protein eS24.